Here is an 881-residue protein sequence, read N- to C-terminus: Probable intermembrane transport protein HI_1672 (881 aa).

The chain crosses the membrane as a helical span at residues 30 to 49; it reads FWLLPFIALCIGAILFFQIV.

This sequence belongs to the PqiB family.

It is found in the cell inner membrane. The polypeptide is Probable intermembrane transport protein HI_1672 (Haemophilus influenzae (strain ATCC 51907 / DSM 11121 / KW20 / Rd)).